We begin with the raw amino-acid sequence, 436 residues long: MLSYTSHCLQALLGVASLPYRQYQAYSSPQAPLQVPQVPQAGPPITTLVSSCAGFSYPEVACIDRYGSLLQGEFERKVRNVLGDADTYISTNAPSEPTFSDLQNADFLVWNQSAAKAILGPNPHVDFMFSIEDCSHEAPVYVPTTNELYFSRLQQGFLPQLVINLNNDPPTLEEKLAQPPIYAATGARFRDGLLYLATIGGNESLAGYTFRPGLYTLDPITGKTQALLNNYYGYYFNAVDDLDIDHEGQIWFTDNDYGRPCQVNTYAPQINAATYRFNPKTGLVTMVDDTLLEPNGLTFSPDNKTVYLTDTGAGSAIIDPNIYPAPHIAYNSTRKGRTIYAYDVAPSRKALLNKRPVYLSMEYAPDGIKTSREGYLVSATGKGVVVLTDEGEPLVRVQTNFTVINIAFAGAERDELWAIGKGGVARIRWGLKGSYA.

A signal peptide spans 1–27 (MLSYTSHCLQALLGVASLPYRQYQAYS).

The protein belongs to the SMP-30/CGR1 family.

The protein operates within secondary metabolite biosynthesis. Its function is as follows. Lactonohydrolase; part of the gene cluster that mediates the biosynthesis of oryzines, natural products with an unusual maleidride backbone. The two subunits of the fungal fatty acid synthase oryfasA and oryfasB probably form octenoic acid. This fatty acid is most likely activated by the acyl-CoA ligase oryP to give octenyl-CoA before the citrate synthase-like protein oryE catalyzes condensation with oxaloacetate to form tricarboxylic acid. The next steps of the pathways are conjectural, but a favorite possible route has been proposed, beginning with decarboxylation and concomitant dehydration by the decarboxylase oryM, followed by tautomerization, which may lead to the production of a diene intermediate. Reduction of this diene intermediate could give the known metabolite piliformic acid. On the pathway to oryzine B and oryzine A, however, hydroxylation of the diene by the alpha-ketoglutarate-dependent dioxygenase oryG and lactonisation by the lactonohydrolases oryH or oryL could give oryzine B directly. Finally, enoyl reduction by the dehydrogenase oryD would then convert oryzine B into oryzine A. This chain is Lactonohydrolase oryL, found in Aspergillus oryzae (strain ATCC 42149 / RIB 40) (Yellow koji mold).